Reading from the N-terminus, the 293-residue chain is MANSKFEYVKQFEQPDSLLPNTWIVVRLDGRGFTKFSTKYAFEKPNDKRALDLMNAAARSVMSELPDITIAYGVSDEYSFVFHKSCTLFERRASKLVSTIVSTFTAYYIHHWPTYFVDGPPLSPPLPSFDGRAVCYPSVQNLRDYMSWRQVDCHINNLYNTTFWALINQGGMDGTAAELMLKGTFSADKNEILFKKFGINYNNEPEMFKKGSVVFRNYELVEPGTKKVSEEEAEEMSSSAVPEVKSKSQVEKDKKVRTKAKIVVEHLDIIRDEFWERRPWLLSGTPGKVPKEP.

Asp-29, Gly-30, and Asp-76 together coordinate Mg(2+). GTP contacts are provided by residues Asp-29 to Thr-34 and Ser-75 to Asp-76. The disordered stretch occupies residues Lys-226–Lys-252.

The protein belongs to the tRNA(His) guanylyltransferase family. Mg(2+) is required as a cofactor.

It carries out the reaction a 5'-end ribonucleotide-tRNA(His) + GTP + ATP + H2O = a 5'-end phospho-guanosine-ribonucleotide-tRNA(His) + AMP + 2 diphosphate + H(+). Adds a GMP to the 5'-end of tRNA(His) after transcription and RNase P cleavage. The polypeptide is tRNA(His) guanylyltransferase (rgt-1) (Neurospora crassa (strain ATCC 24698 / 74-OR23-1A / CBS 708.71 / DSM 1257 / FGSC 987)).